Reading from the N-terminus, the 244-residue chain is 7-cyano-7-deazaguanine synthase (244 aa).

ATP is bound at residue 17–27 (FSGGQDSTTCL). The Zn(2+) site is built by Cys205, Cys220, Cys223, and Cys226.

It belongs to the QueC family. The cofactor is Zn(2+).

It catalyses the reaction 7-carboxy-7-deazaguanine + NH4(+) + ATP = 7-cyano-7-deazaguanine + ADP + phosphate + H2O + H(+). It functions in the pathway purine metabolism; 7-cyano-7-deazaguanine biosynthesis. Functionally, catalyzes the ATP-dependent conversion of 7-carboxy-7-deazaguanine (CDG) to 7-cyano-7-deazaguanine (preQ(0)). The polypeptide is 7-cyano-7-deazaguanine synthase (Bordetella parapertussis (strain 12822 / ATCC BAA-587 / NCTC 13253)).